A 148-amino-acid polypeptide reads, in one-letter code: Large ribosomal subunit protein bL9 (148 aa).

Belongs to the bacterial ribosomal protein bL9 family.

In terms of biological role, binds to the 23S rRNA. The chain is Large ribosomal subunit protein bL9 from Hahella chejuensis (strain KCTC 2396).